Reading from the N-terminus, the 144-residue chain is (R)-specific enoyl-CoA hydratase (144 aa).

A MaoC-like domain is found at 13 to 128 (DIKEGQSASL…TFRTTCTVAG (116 aa)).

Homotetramer.

The catalysed reaction is a (3R)-3-hydroxyacyl-CoA = a (2E)-enoyl-CoA + H2O. Its function is as follows. Catalyzes the hydration of trans-2-enoyl-CoAs with a chain-length of 4-6 carbon atoms, forming the corresponding (3R)-3-hydroxyacyl-CoAs, which can then be utilized for the production of polyhydroxyalkanoates (PHA) polymers. Cannot use trans-2,3-octenoyl-CoA as substrate. This is (R)-specific enoyl-CoA hydratase from Rhodospirillum rubrum (strain ATCC 11170 / ATH 1.1.1 / DSM 467 / LMG 4362 / NCIMB 8255 / S1).